A 781-amino-acid polypeptide reads, in one-letter code: Serine/threonine-protein kinase PLK4 (781 aa).

The region spanning 14-268 (YEVQHLLGKG…LEQVLRHPFM (255 aa)) is the Protein kinase domain. Residues 20–28 (LGKGGFACV) and K43 each bind ATP. D139 acts as the Proton acceptor in catalysis. The Cryptic POLO box 1 (CPB1) domain maps to 397–514 (TEHISVPPLN…ARFVGLVKSK (118 aa)). The segment at 463-486 (QPDPGRGLPIQEQTSETHSSGTDN) is disordered. The segment covering 473-486 (QEQTSETHSSGTDN) has biased composition (polar residues). In terms of domain architecture, Cryptic POLO box 2 (CPB2) spans 515-618 (TPKVTYFSAL…GRRPVVEVLP (104 aa)). Residues 672–751 (PIKRLNVPGV…LPQVQMKLRC (80 aa)) enclose the POLO box domain.

The protein belongs to the protein kinase superfamily. Ser/Thr protein kinase family. CDC5/Polo subfamily. As to quaternary structure, homodimer. Post-translationally, ubiquitinated by the SCF(Slimb) ubiquitin ligase complex; leading to its degradation by the proteasome during interphase and regulating centriole number and ensuring the block to centriole reduplication.

Its subcellular location is the cytoplasm. The protein resides in the cytoskeleton. The protein localises to the microtubule organizing center. It localises to the centrosome. It is found in the centriole. The enzyme catalyses L-seryl-[protein] + ATP = O-phospho-L-seryl-[protein] + ADP + H(+). It catalyses the reaction L-threonyl-[protein] + ATP = O-phospho-L-threonyl-[protein] + ADP + H(+). In terms of biological role, serine/threonine-protein kinase that plays a central role in centriole duplication. Able to trigger procentriole formation on the surface of the mother centriole cylinder, using mother centriole as a platform, leading to the recruitment of centriole biogenesis proteins such as sas-6. When overexpressed, it is able to induce centrosome amplification through the simultaneous generation of multiple procentrioles adjoining each parental centriole during S phase. Centrosome amplification following overexpression can initiate tumorigenesis, highlighting the importance of centrosome regulation in cancers. The sequence is that of Serine/threonine-protein kinase PLK4 (SAK) from Drosophila virilis (Fruit fly).